A 187-amino-acid chain; its full sequence is 5-formyltetrahydrofolate cyclo-ligase (187 aa).

Residues 6 to 10, 139 to 146, and Asp-178 contribute to the ATP site; these read RQQIR and GMGGGFYD.

It belongs to the 5-formyltetrahydrofolate cyclo-ligase family.

It carries out the reaction (6S)-5-formyl-5,6,7,8-tetrahydrofolate + ATP = (6R)-5,10-methenyltetrahydrofolate + ADP + phosphate. It functions in the pathway one-carbon metabolism; tetrahydrofolate interconversion. Its function is as follows. Involved in the removal of 5-formyltetrahydrofolate. In vitro, it is a potent inhibitor of various folate-dependent enzymes in the C1 metabolism network and in vivo it might function as a folate storage. 5-formyltetrahydrofolate is also used as an antifolate rescue agent in cancer chemotherapy. Catalyzes the irreversible ATP-dependent transformation of 5-formyltetrahydrofolate (5-CHO-THF) to form 5,10-methenyltetrahydrofolate (5,10-CH=THF). The reverse reaction is catalyzed by the serine hydroxymethyltransferase GlyA (SHMT). This Haemophilus influenzae (strain ATCC 51907 / DSM 11121 / KW20 / Rd) protein is 5-formyltetrahydrofolate cyclo-ligase.